We begin with the raw amino-acid sequence, 72 residues long: UPF0426 protein asl4034 (72 aa).

The protein belongs to the UPF0426 family.

The polypeptide is UPF0426 protein asl4034 (Nostoc sp. (strain PCC 7120 / SAG 25.82 / UTEX 2576)).